The chain runs to 96 residues: Plasminogen-like protein A (96 aa).

Positions 1 to 19 (MEHKEVVLLLLLFLKSGQG) are cleaved as a signal peptide. The region spanning 20–96 (EPLDDYVNAQ…RMRDVVLFEK (77 aa)) is the PAN domain. 2 disulfides stabilise this stretch: Cys-49-Cys-73 and Cys-53-Cys-61.

Expressed in liver.

Its subcellular location is the secreted. Functionally, may bind non-covalently to lysine binding sites present in the kringle structures of plasminogen. This may interfere with the binding of fibrin or alpha-2-antiplasmin to plasminogen and may result in the localization of activity at sites necessary for extracellular matrix destruction. The sequence is that of Plasminogen-like protein A (PLGLA) from Homo sapiens (Human).